The chain runs to 223 residues: UPF0502 protein Sbal223_2520 (223 aa).

This sequence belongs to the UPF0502 family.

In Shewanella baltica (strain OS223), this protein is UPF0502 protein Sbal223_2520.